Here is a 272-residue protein sequence, read N- to C-terminus: Transcription factor GAL1 (272 aa).

A compositionally biased stretch (polar residues) spans 1-10; that stretch reads MAGKNMSSRL. Disordered regions lie at residues 1-49, 102-215, and 246-272; these read MAGK…SPET, YGAI…SRDI, and KGHLQKDCPDRKQRRGDKRKSGGAMDY. Composition is skewed to acidic residues over residues 113-122 and 152-174; these read ESDDDQDEEQ and SEQDSDASSDSDSDDDEDLDEAE. Residues 175–215 are compositionally biased toward basic and acidic residues; it reads LLIKAERKEAAAKLRAERKAQRKADEVKSKQMAERRRSRDI. A CCHC-type zinc finger spans residues 240-255; it reads CHVCGQKGHLQKDCPD.

The protein localises to the nucleus. Transcription factor; part of the gene cluster that mediates the biosynthesis of liamocins, glycolipids (also called heavy oils) composed of a single mannitol or arabitol headgroup linked to either three, four or even six 3,5-dihydroxydecanoic ester tail-groups. Positively regulates the expression of PKS1 and EST1 that mediate the biosynthesis of liamocins. The polypeptide is Transcription factor GAL1 (Aureobasidium melanogenum (Aureobasidium pullulans var. melanogenum)).